The primary structure comprises 257 residues: MLAKRIIPCLDVRDGQVVKGVQFRNHEIIGDIVPLAKRYAEEGADELVFYDITASSDGRTVDKSWVERVAEVIDIPFCVAGGIKTIADAEQIFAFGADKISINSPALADPNLITALADRFGVQAIVVGIDSWFEKETGKYWVNQYTGDESRTRQTNWQLLDWVKEVQQRGAGEIVLNMMNQDGVRNGYDLVQLKKVREVCKVPLIASGGAGETVHFRDAFVEANVDGALAASVFHKQIINIGELKAYLTKEGVEIRR.

Active-site residues include D11 and D130.

It belongs to the HisA/HisF family. In terms of assembly, heterodimer of HisH and HisF.

The protein localises to the cytoplasm. The catalysed reaction is 5-[(5-phospho-1-deoxy-D-ribulos-1-ylimino)methylamino]-1-(5-phospho-beta-D-ribosyl)imidazole-4-carboxamide + L-glutamine = D-erythro-1-(imidazol-4-yl)glycerol 3-phosphate + 5-amino-1-(5-phospho-beta-D-ribosyl)imidazole-4-carboxamide + L-glutamate + H(+). The protein operates within amino-acid biosynthesis; L-histidine biosynthesis; L-histidine from 5-phospho-alpha-D-ribose 1-diphosphate: step 5/9. In terms of biological role, IGPS catalyzes the conversion of PRFAR and glutamine to IGP, AICAR and glutamate. The HisF subunit catalyzes the cyclization activity that produces IGP and AICAR from PRFAR using the ammonia provided by the HisH subunit. This chain is Imidazole glycerol phosphate synthase subunit HisF, found in Actinobacillus succinogenes (strain ATCC 55618 / DSM 22257 / CCUG 43843 / 130Z).